Here is a 260-residue protein sequence, read N- to C-terminus: Small ribosomal subunit protein cS22 (260 aa).

A chloroplast-targeting transit peptide spans 1 to 62; that stretch reads MATISSILPC…TNPPLLKVRA (62 aa). A compositionally biased stretch (low complexity) spans 63–78; the sequence is VVTEETSSSSTASSSS. Residues 63 to 83 form a disordered region; sequence VVTEETSSSSTASSSSDGEGA. RRM domains follow at residues 84–162 and 184–260; these read RRLY…ITEK and YKVY…VNKA.

Component of the chloroplast small ribosomal subunit (SSU). Mature 70S chloroplast ribosomes of higher plants consist of a small (30S) and a large (50S) subunit. The 30S small subunit contains 1 molecule of ribosomal RNA (16S rRNA) and 24 different proteins. The 50S large subunit contains 3 rRNA molecules (23S, 5S and 4.5S rRNA) and 33 different proteins.

It localises to the plastid. The protein localises to the chloroplast. Component of the chloroplast ribosome (chloro-ribosome), a dedicated translation machinery responsible for the synthesis of chloroplast genome-encoded proteins, including proteins of the transcription and translation machinery and components of the photosynthetic apparatus. cS22 may have a role in the recruitment of stored chloroplast mRNAs for active protein synthesis. This Spinacia oleracea (Spinach) protein is Small ribosomal subunit protein cS22 (PSRP2).